We begin with the raw amino-acid sequence, 303 residues long: Glycine--tRNA ligase alpha subunit (303 aa).

Belongs to the class-II aminoacyl-tRNA synthetase family. Tetramer of two alpha and two beta subunits.

It is found in the cytoplasm. It carries out the reaction tRNA(Gly) + glycine + ATP = glycyl-tRNA(Gly) + AMP + diphosphate. This chain is Glycine--tRNA ligase alpha subunit, found in Streptococcus equi subsp. zooepidemicus (strain H70).